We begin with the raw amino-acid sequence, 317 residues long: DNA-directed RNA polymerase subunit alpha (317 aa).

Positions Met1 to Phe229 are alpha N-terminal domain (alpha-NTD). The tract at residues Ala245–Arg317 is alpha C-terminal domain (alpha-CTD).

It belongs to the RNA polymerase alpha chain family. As to quaternary structure, homodimer. The RNAP catalytic core consists of 2 alpha, 1 beta, 1 beta' and 1 omega subunit. When a sigma factor is associated with the core the holoenzyme is formed, which can initiate transcription.

The enzyme catalyses RNA(n) + a ribonucleoside 5'-triphosphate = RNA(n+1) + diphosphate. In terms of biological role, DNA-dependent RNA polymerase catalyzes the transcription of DNA into RNA using the four ribonucleoside triphosphates as substrates. The sequence is that of DNA-directed RNA polymerase subunit alpha from Aquifex aeolicus (strain VF5).